An 842-amino-acid chain; its full sequence is Probable cleavage and polyadenylation specificity factor subunit 2 (842 aa).

The segment covering 414–425 (AEETRIRMERAR) has biased composition (basic and acidic residues). Disordered regions lie at residues 414-442 (AEET…DDIA) and 708-747 (METF…SIPI). Acidic residues predominate over residues 432–441 (ESDDSDDDDI). Polar residues predominate over residues 731–747 (SNGQSKENDENASSIPI).

This sequence belongs to the metallo-beta-lactamase superfamily. RNA-metabolizing metallo-beta-lactamase-like family. CPSF2/YSH1 subfamily. CPSF is a heterotetramer composed of four distinct subunits 160, 100, 70 and 30 kDa.

The protein resides in the nucleus. CPSF plays a key role in pre-mRNA 3'-end formation, recognizing the AAUAAA signal sequence and interacting with poly(A)polymerase and other factors to bring about cleavage and poly(A) addition. This is Probable cleavage and polyadenylation specificity factor subunit 2 from Caenorhabditis briggsae.